Reading from the N-terminus, the 101-residue chain is CRISPR-associated endoribonuclease Cas2 (101 aa).

Asp8 provides a ligand contact to Mg(2+).

It belongs to the CRISPR-associated endoribonuclease Cas2 protein family. As to quaternary structure, homodimer, forms a heterotetramer with a Cas1 homodimer. Requires Mg(2+) as cofactor.

CRISPR (clustered regularly interspaced short palindromic repeat), is an adaptive immune system that provides protection against mobile genetic elements (viruses, transposable elements and conjugative plasmids). CRISPR clusters contain sequences complementary to antecedent mobile elements and target invading nucleic acids. CRISPR clusters are transcribed and processed into CRISPR RNA (crRNA). Functions as a ssRNA-specific endoribonuclease. Involved in the integration of spacer DNA into the CRISPR cassette. This Treponema denticola (strain ATCC 35405 / DSM 14222 / CIP 103919 / JCM 8153 / KCTC 15104) protein is CRISPR-associated endoribonuclease Cas2.